Reading from the N-terminus, the 371-residue chain is Carnitine monooxygenase oxygenase subunit (371 aa).

In terms of domain architecture, Rieske spans 44–152 (WICVAHGSEL…VEEYAGFVFI (109 aa)). Positions 86, 88, 106, and 109 each coordinate [2Fe-2S] cluster. Positions 208, 213, and 323 each coordinate Fe cation.

Belongs to the bacterial ring-hydroxylating dioxygenase alpha subunit family. CntA subfamily. Composed of an oxygenase subunit and a reductase subunit. [2Fe-2S] cluster is required as a cofactor. The cofactor is Fe cation.

It carries out the reaction (R)-carnitine + NADH + O2 + H(+) = (3R)-3-hydroxy-4-oxobutanoate + trimethylamine + NAD(+) + H2O. The catalysed reaction is (R)-carnitine + NADPH + O2 + H(+) = (3R)-3-hydroxy-4-oxobutanoate + trimethylamine + NADP(+) + H2O. The protein operates within amine and polyamine metabolism; carnitine metabolism. Its activity is regulated as follows. Inhibited by EDTA. Functionally, converts carnitine to trimethylamine and malic semialdehyde. Acts on both enantiomers. The chain is Carnitine monooxygenase oxygenase subunit from Acinetobacter pittii (strain PHEA-2).